A 452-amino-acid polypeptide reads, in one-letter code: Bifunctional F420 biosynthesis protein FbiB (452 aa).

Residues 1-248 form a coenzyme F420:L-glutamate ligase region; that stretch reads MVSAPGDHAG…AGEEDLFWLG (248 aa). GTP is bound by residues 24–27, serine 54, and lysine 59; that span reads LPEF. Aspartate 113 contacts a divalent metal cation. Asparagine 116 is a GTP binding site. 2 residues coordinate a divalent metal cation: aspartate 154 and threonine 155. Residues 249 to 452 are dehydro-coenzyme F420-0 reductase; that stretch reads TAEAVERGRR…RDPGDGLVER (204 aa). FMN is bound by residues 264–268 and alanine 292; that span reads RRSVR. Aspartate 324 contributes to the coenzyme F420-(gamma-Glu)n binding site. Residues glycine 403 and arginine 440 each contribute to the FMN site.

This sequence in the N-terminal section; belongs to the CofE family. Requires Mg(2+) as cofactor. The cofactor is Mn(2+). It depends on K(+) as a cofactor.

It catalyses the reaction oxidized coenzyme F420-0 + GTP + L-glutamate = oxidized coenzyme F420-1 + GDP + phosphate + H(+). It carries out the reaction oxidized coenzyme F420-0 + FMN + H(+) = dehydro coenzyme F420-0 + FMNH2. The enzyme catalyses oxidized coenzyme F420-1 + GTP + L-glutamate = oxidized coenzyme F420-2 + GDP + phosphate + H(+). Its pathway is cofactor biosynthesis; coenzyme F420 biosynthesis. In terms of biological role, bifunctional enzyme that catalyzes the GTP-dependent successive addition of two or more gamma-linked L-glutamates to the L-lactyl phosphodiester of 7,8-didemethyl-8-hydroxy-5-deazariboflavin (F420-0) to form polyglutamated F420 derivatives, and the FMNH2-dependent reduction of dehydro-F420-0 to form F420-0. This chain is Bifunctional F420 biosynthesis protein FbiB, found in Nocardia farcinica (strain IFM 10152).